The chain runs to 439 residues: Ribosomal protein uS12 methylthiotransferase RimO (439 aa).

An MTTase N-terminal domain is found at 7-119 (KQLCLISLGC…IDIMIAKKQN (113 aa)). The [4Fe-4S] cluster site is built by cysteine 16, cysteine 50, cysteine 82, cysteine 151, cysteine 155, and cysteine 158. One can recognise a Radical SAM core domain in the interval 137–368 (TGSSVHAYVK…ALKHQNHSFK (232 aa)).

This sequence belongs to the methylthiotransferase family. RimO subfamily. It depends on [4Fe-4S] cluster as a cofactor.

It localises to the cytoplasm. It carries out the reaction L-aspartate(89)-[ribosomal protein uS12]-hydrogen + (sulfur carrier)-SH + AH2 + 2 S-adenosyl-L-methionine = 3-methylsulfanyl-L-aspartate(89)-[ribosomal protein uS12]-hydrogen + (sulfur carrier)-H + 5'-deoxyadenosine + L-methionine + A + S-adenosyl-L-homocysteine + 2 H(+). In terms of biological role, catalyzes the methylthiolation of an aspartic acid residue of ribosomal protein uS12. This chain is Ribosomal protein uS12 methylthiotransferase RimO, found in Helicobacter pylori (strain ATCC 700392 / 26695) (Campylobacter pylori).